Reading from the N-terminus, the 63-residue chain is MKANELREKSVEELNTELLGLLREQFNLRMQAASGQLQQTHLVKQVRHNIARVKTLLTEKAGA.

Belongs to the universal ribosomal protein uL29 family.

This chain is Large ribosomal subunit protein uL29, found in Pectobacterium carotovorum subsp. carotovorum (strain PC1).